The chain runs to 1127 residues: DNA-directed RNA polymerase I subunit RPA2 homolog (1127 aa).

Residue Ser1025 is modified to Phosphoserine.

The protein belongs to the RNA polymerase beta chain family. Component of the RNA polymerase I (Pol I) complex consisting of at least 13 subunits.

The protein localises to the nucleus. Its subcellular location is the nucleolus. It carries out the reaction RNA(n) + a ribonucleoside 5'-triphosphate = RNA(n+1) + diphosphate. Its activity is regulated as follows. Antisense ribosomal siRNAs silence rRNA expression during the elongation phase by decreasing rpoa-2 occupancy downstream of the RNAi-targeted region in nrde-2-dependent manner. DNA-dependent RNA polymerase catalyzes the transcription of DNA into RNA using the four ribonucleoside triphosphates as substrates. Second largest core component of RNA polymerase I which synthesizes ribosomal RNA precursors. Proposed to contribute to the polymerase catalytic activity and forms the polymerase active center together with the largest subunit. Pol I is composed of mobile elements and RPA2 is part of the core element with the central large cleft and probably a clamp element that moves to open and close the cleft. Specifically binds to 18S, 5.8S and 26S rDNA, but not to 5S rDNA. This is DNA-directed RNA polymerase I subunit RPA2 homolog from Caenorhabditis elegans.